Here is a 148-residue protein sequence, read N- to C-terminus: Endoribonuclease YbeY (148 aa).

Zn(2+)-binding residues include His113, His117, and His123.

It belongs to the endoribonuclease YbeY family. Zn(2+) is required as a cofactor.

The protein resides in the cytoplasm. Its function is as follows. Single strand-specific metallo-endoribonuclease involved in late-stage 70S ribosome quality control and in maturation of the 3' terminus of the 16S rRNA. The sequence is that of Endoribonuclease YbeY from Borrelia recurrentis (strain A1).